The primary structure comprises 169 residues: MLRSEKPVAVEDIVNIYKESPSIIITHYHGLTVSQVSSLRESLKSKEAGFKVVKNTLAKIAANQTGLNSIVNLFAGPTAIVYSKEPVEMAKLVVNFAKANDNLKIIGGIVDNHVLDEHSIKELSKLPTLNELRGKIVGLLQAPATKVVGVLQAPSSSMARVIQAHASKN.

This sequence belongs to the universal ribosomal protein uL10 family. In terms of assembly, part of the ribosomal stalk of the 50S ribosomal subunit. The N-terminus interacts with L11 and the large rRNA to form the base of the stalk. The C-terminus forms an elongated spine to which L12 dimers bind in a sequential fashion forming a multimeric L10(L12)X complex.

Its function is as follows. Forms part of the ribosomal stalk, playing a central role in the interaction of the ribosome with GTP-bound translation factors. The sequence is that of Large ribosomal subunit protein uL10 from Rickettsia africae (strain ESF-5).